The chain runs to 346 residues: MVRVGIVGATGYGGAELIRLLAGHPHVEIASLYSSSSEGDGLEKSFPHVAGLGLPTLSPIDADSMSGVNDLIFLATPAGVSSTLSPKLVEKGVKVIDLSGDFRLVNGAVYKTWYKHEPAPSQWVEAAVYGLTEWNQEQVAGASLIANPGCYPTATLLALLPLMKTGWVQSNSWIVDAKSGVSGAGRGVSLGVHYSETNESIHAYKVASHQHTPEIEQELQKQSGEETLVQFTPHLVPMTRGILVTAYGQLTADVTQVQIQELYEATYADKPFVRVRPAGSHPHTKEVYGSNYCDIAIHVDQRTKRVILLSVIDNMMKGAAGQAVQNMNVMFDLPEKTGLPLVPVYP.

Residue Cys-150 is part of the active site.

The protein belongs to the NAGSA dehydrogenase family. Type 1 subfamily.

It localises to the cytoplasm. It catalyses the reaction N-acetyl-L-glutamate 5-semialdehyde + phosphate + NADP(+) = N-acetyl-L-glutamyl 5-phosphate + NADPH + H(+). It functions in the pathway amino-acid biosynthesis; L-arginine biosynthesis; N(2)-acetyl-L-ornithine from L-glutamate: step 3/4. Functionally, catalyzes the NADPH-dependent reduction of N-acetyl-5-glutamyl phosphate to yield N-acetyl-L-glutamate 5-semialdehyde. The protein is N-acetyl-gamma-glutamyl-phosphate reductase of Brevibacillus brevis (strain 47 / JCM 6285 / NBRC 100599).